Reading from the N-terminus, the 224-residue chain is Adenylate kinase (224 aa).

10–15 (GSGKST) is an ATP binding site. The segment at 30 to 59 (SSGDLIRGEIERKSSLGLEMAAYLSRGDLI) is NMP. AMP is bound by residues serine 31, arginine 36, 57-59 (DLI), 83-86 (GYPR), and glutamine 90. Residues 124–161 (GRRICPNCGAVYHITYNPPKVPGICDVCGTKLIQRTDD) are LID. Residue arginine 125 participates in ATP binding. 2 residues coordinate Zn(2+): cysteine 128 and cysteine 131. 134 to 135 (VY) is a binding site for ATP. Zn(2+) is bound by residues cysteine 148 and cysteine 151. AMP is bound by residues arginine 158 and arginine 169. An ATP-binding site is contributed by glycine 197.

The protein belongs to the adenylate kinase family. As to quaternary structure, monomer.

The protein localises to the cytoplasm. The enzyme catalyses AMP + ATP = 2 ADP. It participates in purine metabolism; AMP biosynthesis via salvage pathway; AMP from ADP: step 1/1. Catalyzes the reversible transfer of the terminal phosphate group between ATP and AMP. Plays an important role in cellular energy homeostasis and in adenine nucleotide metabolism. This is Adenylate kinase from Thermococcus gammatolerans (strain DSM 15229 / JCM 11827 / EJ3).